Consider the following 367-residue polypeptide: Alcohol dehydrogenase 2 (367 aa).

Zn(2+)-binding residues include cysteine 48, histidine 74, cysteine 107, cysteine 110, cysteine 113, cysteine 121, and cysteine 163. Residues glycine 187–glycine 193, aspartate 212, lysine 216, valine 286–isoleucine 288, and arginine 361 contribute to the NAD(+) site.

Belongs to the zinc-containing alcohol dehydrogenase family. As to quaternary structure, homotetramer. Zn(2+) is required as a cofactor.

The protein localises to the cytoplasm. The catalysed reaction is a primary alcohol + NAD(+) = an aldehyde + NADH + H(+). It carries out the reaction a secondary alcohol + NAD(+) = a ketone + NADH + H(+). This chain is Alcohol dehydrogenase 2 (alcB), found in Emericella nidulans (strain FGSC A4 / ATCC 38163 / CBS 112.46 / NRRL 194 / M139) (Aspergillus nidulans).